A 208-amino-acid polypeptide reads, in one-letter code: Thymidylate kinase (208 aa).

Position 10 to 17 (10 to 17 (GPEGSGKT)) interacts with ATP.

Belongs to the thymidylate kinase family.

The enzyme catalyses dTMP + ATP = dTDP + ADP. Functionally, phosphorylation of dTMP to form dTDP in both de novo and salvage pathways of dTTP synthesis. This is Thymidylate kinase from Bacillus cereus (strain ATCC 14579 / DSM 31 / CCUG 7414 / JCM 2152 / NBRC 15305 / NCIMB 9373 / NCTC 2599 / NRRL B-3711).